The sequence spans 294 residues: 7,8-dihydropterin-6-methyl-4-(beta-D-ribofuranosyl)-aminobenzene-5'-phosphate synthase (294 aa).

4 residues coordinate substrate: Glu-116, Asp-186, Lys-228, and His-265.

It belongs to the metallo-beta-lactamase superfamily. Requires Mg(2+) as cofactor.

It catalyses the reaction 4-(beta-D-ribofuranosyl)aminobenzene 5'-phosphate + (7,8-dihydropterin-6-yl)methyl diphosphate = N-[(7,8-dihydropterin-6-yl)methyl]-4-(beta-D-ribofuranosyl)aniline 5'-phosphate + diphosphate. The protein operates within cofactor biosynthesis; 5,6,7,8-tetrahydromethanopterin biosynthesis. Its function is as follows. Catalyzes the condensation of 6-hydroxymethyl-7,8-dihydropterin pyrophosphate (DHPP) with 4-(beta-D-ribofuranosyl)-aminobenzene-5'-phosphate (beta-RFA-P) to form 7,8-dihydropterin-6-methyl-4-(beta-D-ribofuranosyl)-aminobenzene-5'-phosphate, a precursor in the biosynthesis of 5,6,7,8-tetrahydromethanopterin (H4MPT). To a lesser extent, is able to condense beta-RFA-P with another arylamine, 1-(4-aminophenyl)-1-deoxy-D-ribitol (APDR), to form 7,8-dihydropterin-6-methyl-1-(4-aminophenyl)-1-deoxy-D-ribitol. Dephosphorylated beta-RFA-P is not a substrate. The sequence is that of 7,8-dihydropterin-6-methyl-4-(beta-D-ribofuranosyl)-aminobenzene-5'-phosphate synthase from Methanocaldococcus jannaschii (strain ATCC 43067 / DSM 2661 / JAL-1 / JCM 10045 / NBRC 100440) (Methanococcus jannaschii).